Reading from the N-terminus, the 699-residue chain is Polyribonucleotide nucleotidyltransferase (699 aa).

2 residues coordinate Mg(2+): aspartate 485 and aspartate 491. In terms of domain architecture, KH spans 552–611 (PRITTIKINPEKIRDVIGKGGAVIRALTEETGTTIELEDDGTVKIASSNGEATKEAIRRI). One can recognise an S1 motif domain in the interval 621–689 (GRIYNGKVIR…RQGRVRLSIK (69 aa)).

This sequence belongs to the polyribonucleotide nucleotidyltransferase family. In terms of assembly, component of the RNA degradosome, which is a multiprotein complex involved in RNA processing and mRNA degradation. Mg(2+) serves as cofactor.

The protein resides in the cytoplasm. It carries out the reaction RNA(n+1) + phosphate = RNA(n) + a ribonucleoside 5'-diphosphate. Its function is as follows. Involved in mRNA degradation. Catalyzes the phosphorolysis of single-stranded polyribonucleotides processively in the 3'- to 5'-direction. The sequence is that of Polyribonucleotide nucleotidyltransferase from Shewanella sp. (strain MR-4).